The sequence spans 465 residues: 3-isopropylmalate dehydratase large subunit (465 aa).

Residues cysteine 347, cysteine 407, and cysteine 410 each coordinate [4Fe-4S] cluster.

Belongs to the aconitase/IPM isomerase family. LeuC type 1 subfamily. Heterodimer of LeuC and LeuD. [4Fe-4S] cluster serves as cofactor.

It catalyses the reaction (2R,3S)-3-isopropylmalate = (2S)-2-isopropylmalate. The protein operates within amino-acid biosynthesis; L-leucine biosynthesis; L-leucine from 3-methyl-2-oxobutanoate: step 2/4. Its function is as follows. Catalyzes the isomerization between 2-isopropylmalate and 3-isopropylmalate, via the formation of 2-isopropylmaleate. This chain is 3-isopropylmalate dehydratase large subunit, found in Buchnera aphidicola subsp. Pemphigus spyrothecae.